Consider the following 466-residue polypeptide: VGFKAGVKEYKLTYYTPEYETKDTDILAAFRVTPQPGVPPEEAGAAVAAESSTGTWTTVWTDGLTSLDRYKGRCYNIEPVPGETDQYICYVAYPLDLFEEGSVTNMFTSIVGNVFGFKALRALRLEDLRIPPAYIKTFQGPPHGIQVERDKLNKYGRPLLGCTIKPKLGLSAKNYGRAVYECLRGGLDFTKDDENVNSQPFMRWRDRFLFCAEAIYKSQAETGEIKGHYLNATAGTCEEMIKRAVFARELGVPIVMHDYLTGGFTANTSLAHYCRDNGLLLHIHRAMHAVIDRQKNHGIHFRVLAKALRMSGGDHIHSGTVVGKLEGERDITLGFVDLLRDDFIEEDRSRGIYFTQDWVSLPGVLPVASGGIHVWHMPALTEIFGDDSVLQFGGGTLGHPWGNAPGAVANRVALEACVQARNEGRDLAAEGNAIIREASKWSPELAAACEVWKEIKFEFKAVDTLD.

Lysine 4 is subject to N6,N6,N6-trimethyllysine. The substrate site is built by asparagine 113 and threonine 163. The active-site Proton acceptor is lysine 165. Lysine 167 serves as a coordination point for substrate. Mg(2+) is bound by residues lysine 191, aspartate 193, and glutamate 194. Lysine 191 carries the N6-carboxylysine modification. Histidine 284 (proton acceptor) is an active-site residue. Substrate is bound by residues arginine 285, histidine 317, and serine 369.

This sequence belongs to the RuBisCO large chain family. Type I subfamily. Heterohexadecamer of 8 large chains and 8 small chains; disulfide-linked. The disulfide link is formed within the large subunit homodimers. Requires Mg(2+) as cofactor. The disulfide bond which can form in the large chain dimeric partners within the hexadecamer appears to be associated with oxidative stress and protein turnover.

The protein resides in the plastid. The protein localises to the chloroplast. It catalyses the reaction 2 (2R)-3-phosphoglycerate + 2 H(+) = D-ribulose 1,5-bisphosphate + CO2 + H2O. It carries out the reaction D-ribulose 1,5-bisphosphate + O2 = 2-phosphoglycolate + (2R)-3-phosphoglycerate + 2 H(+). Functionally, ruBisCO catalyzes two reactions: the carboxylation of D-ribulose 1,5-bisphosphate, the primary event in carbon dioxide fixation, as well as the oxidative fragmentation of the pentose substrate in the photorespiration process. Both reactions occur simultaneously and in competition at the same active site. The protein is Ribulose bisphosphate carboxylase large chain of Pinguicula caerulea (Blueflower butterwort).